Consider the following 548-residue polypeptide: Chaperonin GroEL (548 aa).

ATP-binding positions include 29 to 32 (TLGP), Lys50, 86 to 90 (DGTTT), Gly414, 478 to 480 (NAA), and Asp494.

It belongs to the chaperonin (HSP60) family. Forms a cylinder of 14 subunits composed of two heptameric rings stacked back-to-back. Interacts with the co-chaperonin GroES.

The protein localises to the cytoplasm. It carries out the reaction ATP + H2O + a folded polypeptide = ADP + phosphate + an unfolded polypeptide.. Functionally, together with its co-chaperonin GroES, plays an essential role in assisting protein folding. The GroEL-GroES system forms a nano-cage that allows encapsulation of the non-native substrate proteins and provides a physical environment optimized to promote and accelerate protein folding. The chain is Chaperonin GroEL from Alcanivorax borkumensis (strain ATCC 700651 / DSM 11573 / NCIMB 13689 / SK2).